Reading from the N-terminus, the 189-residue chain is Phosphomevalonate kinase (189 aa).

ATP is bound by residues 10-16 and Arg-138; that span reads KRKCGKD. Asn-168 contacts substrate.

It is found in the cytoplasm. Its subcellular location is the cytosol. The enzyme catalyses (R)-5-phosphomevalonate + ATP = (R)-5-diphosphomevalonate + ADP. Its pathway is isoprenoid biosynthesis; isopentenyl diphosphate biosynthesis via mevalonate pathway; isopentenyl diphosphate from (R)-mevalonate: step 2/3. This Drosophila melanogaster (Fruit fly) protein is Phosphomevalonate kinase.